Reading from the N-terminus, the 92-residue chain is Probable Fe(2+)-trafficking protein (92 aa).

It belongs to the Fe(2+)-trafficking protein family.

Functionally, could be a mediator in iron transactions between iron acquisition and iron-requiring processes, such as synthesis and/or repair of Fe-S clusters in biosynthetic enzymes. The sequence is that of Probable Fe(2+)-trafficking protein from Anaeromyxobacter sp. (strain Fw109-5).